A 341-amino-acid chain; its full sequence is Anthranilate phosphoribosyltransferase (341 aa).

5-phospho-alpha-D-ribose 1-diphosphate is bound by residues Gly82, 85 to 86 (GD), Thr90, 92 to 95 (NIST), 110 to 118 (KHGGRSVSS), and Ser122. Gly82 is an anthranilate binding site. Ser94 provides a ligand contact to Mg(2+). Arg168 contacts anthranilate. Mg(2+) contacts are provided by Asp227 and Glu228.

It belongs to the anthranilate phosphoribosyltransferase family. Homodimer. It depends on Mg(2+) as a cofactor.

The catalysed reaction is N-(5-phospho-beta-D-ribosyl)anthranilate + diphosphate = 5-phospho-alpha-D-ribose 1-diphosphate + anthranilate. It participates in amino-acid biosynthesis; L-tryptophan biosynthesis; L-tryptophan from chorismate: step 2/5. Its function is as follows. Catalyzes the transfer of the phosphoribosyl group of 5-phosphorylribose-1-pyrophosphate (PRPP) to anthranilate to yield N-(5'-phosphoribosyl)-anthranilate (PRA). The polypeptide is Anthranilate phosphoribosyltransferase (Nitrosomonas eutropha (strain DSM 101675 / C91 / Nm57)).